Here is a 167-residue protein sequence, read N- to C-terminus: NADH-ubiquinone oxidoreductase chain 6 (167 aa).

Helical transmembrane passes span 21–41, 45–65, 78–98, and 132–152; these read SPYYGALATAWLALLAALLLL, IIFPAIILMLIYLGGMLVVFI, PINLTMSALMASFGVMLITMI, and SMFIVAVMILTALLFSILEVV.

Belongs to the complex I subunit 6 family.

The protein resides in the mitochondrion membrane. It carries out the reaction a ubiquinone + NADH + 5 H(+)(in) = a ubiquinol + NAD(+) + 4 H(+)(out). Its function is as follows. Core subunit of the mitochondrial membrane respiratory chain NADH dehydrogenase (Complex I) that is believed to belong to the minimal assembly required for catalysis. Complex I functions in the transfer of electrons from NADH to the respiratory chain. The immediate electron acceptor for the enzyme is believed to be ubiquinone. In Branchiostoma floridae (Florida lancelet), this protein is NADH-ubiquinone oxidoreductase chain 6 (ND6).